The sequence spans 206 residues: NDYCKIKCSSGVHTVCQYGESTKPSKNCAGKVIKSVGPTEEEKKLIVEEHNRFRQKVAQGLETRGNPGPQPAASNMNNLVWNDEQAKIAQVWASQCQILVHDKCRNTEKYQVGQNIAYAGSSNHFPSVTKLIQLWENEVKDFNYNTGITNKNFGKVGHYTQMVWGNTKEVGCGSLKYVEKNMKIHYLICNYGPAGNYLGQPIYTKK.

Intrachain disulfides connect C4–C16, C8–C104, C28–C96, and C172–C189. Positions 48 to 191 (EEHNRFRQKV…MKIHYLICNY (144 aa)) constitute an SCP domain.

The protein belongs to the CRISP family. Venom allergen 5-like subfamily. In terms of tissue distribution, expressed by the venom gland.

The protein localises to the secreted. This Polistes gallicus (Paper wasp) protein is Venom allergen 5.